A 670-amino-acid polypeptide reads, in one-letter code: Solute carrier organic anion transporter family member 1A4 (670 aa).

Topologically, residues 1 to 20 are cytoplasmic; it reads MGKSEKEVATHGVRCFSKIK. A helical membrane pass occupies residues 21–40; the sequence is AFLLALTCAYVSKSLSGTYM. The Extracellular portion of the chain corresponds to 41–59; the sequence is NSMLTQIERQFGIPTSVVG. A helical transmembrane segment spans residues 60-80; the sequence is LINGSFEIGNLLLIIFVSYFG. The Cytoplasmic portion of the chain corresponds to 81 to 86; sequence TKLHRP. A helical membrane pass occupies residues 87–111; the sequence is IMIGVGCAVMGLGCFLISIPHFLMG. Residues 112 to 155 lie on the Extracellular side of the membrane; sequence RYEYETTILPTSNLSSNSFVCTENRTQTLKPTQDPTECVKEMKS. Residues N124 and N135 are each glycosylated (N-linked (GlcNAc...) asparagine). A helical transmembrane segment spans residues 156–184; it reads LMWIYVLVGNIIRGMGETPIMPLGISYIE. Residues 185-203 are Cytoplasmic-facing; sequence DFAKSENSPLYIGILETGM. The helical transmembrane segment at 204 to 224 threads the bilayer; it reads TIGPLIGLLLGSSCANIYVDT. Over 225–242 the chain is Extracellular; the sequence is GSVNTDDLTITPTDTRWV. A helical membrane pass occupies residues 243–267; that stretch reads GAWWIGFLVCAGVNILTSIPFFFFP. At 268–311 the chain is on the cytoplasmic side; that stretch reads KTLLKEGLQDNGDGTENAKEEKHREKIKEENRGITKDFFLFMKS. The helical transmembrane segment at 312–333 threads the bilayer; it reads LSCNPIYMIFILISVIQVNAFI. Over 334–353 the chain is Extracellular; that stretch reads NSFTFMPKYLEQQYGKSTAE. Residues 354 to 377 traverse the membrane as a helical segment; the sequence is IVFLMGLYMLPPICLGYLIGGLIM. Residues 378 to 381 lie on the Cytoplasmic side of the membrane; that stretch reads KKFK. A helical transmembrane segment spans residues 382 to 405; the sequence is ITVKKAAYIGFWLSLTEYLLSFVS. The Extracellular portion of the chain corresponds to 406-513; that stretch reads YIMTCDNFPV…PECANKLQYF (108 aa). One can recognise a Kazal-like domain in the interval 433–488; sequence NNVLADCNTKCSCLTNTWDPVCGDNGLSYMSACLAGCEKSVGTGTNMVFQNCSCIQ. Disulfide bonds link C439–C469, C445–C465, and C454–C486. N483 and N492 each carry an N-linked (GlcNAc...) asparagine glycan. Residues 514-536 traverse the membrane as a helical segment; that stretch reads LIISIIGCFIFSLGAIPGYMVLL. The Cytoplasmic portion of the chain corresponds to 537 to 545; sequence RCMKSEEKS. A helical membrane pass occupies residues 546–571; that stretch reads LGVGLHTFCMRILGGIPAPIYFGALI. Over 572-605 the chain is Extracellular; the sequence is DRTCLHWGTLKCGEPGACRMYDINSFRRIYLGLP. A helical membrane pass occupies residues 606-623; the sequence is AALRGASFLPALFILILM. Topologically, residues 624-670 are cytoplasmic; that stretch reads RKFQFPGDIDSSDTDPAEMKLTAKESKCTNVHRSPTMQNDGERKTKL. Phosphoserine occurs at positions 634 and 635. The tract at residues 649–670 is disordered; that stretch reads SKCTNVHRSPTMQNDGERKTKL. The segment covering 651 to 662 has biased composition (polar residues); sequence CTNVHRSPTMQN.

It belongs to the organo anion transporter (TC 2.A.60) family. Highly expressed in brain and liver. Detected at very low levels in heart and lung.

It localises to the cell membrane. It catalyses the reaction estrone 3-sulfate(out) = estrone 3-sulfate(in). The catalysed reaction is taurocholate(out) = taurocholate(in). The enzyme catalyses prostaglandin E2(out) = prostaglandin E2(in). It carries out the reaction L-thyroxine(out) = L-thyroxine(in). Mediates the Na(+)-independent transport of organic anions such as taurocholate, cholate, 17-beta-glucuronosyl estradiol, prostaglandin E2, estrone 3-sulfate, L-thyroxine (T4), the cardiac glycosides ouabain and digoxin and thyroid hormones. Shows a pH-sensitive substrate specificity which may be ascribed to the protonation state of the binding site and leads to a stimulation of substrate transport in an acidic microenvironment. Hydrogencarbonate/HCO3(-) acts as the probable counteranion that exchanges for organic anions. The chain is Solute carrier organic anion transporter family member 1A4 (Slco1a4) from Mus musculus (Mouse).